The following is a 470-amino-acid chain: Protein ASPARTIC PROTEASE IN GUARD CELL 2 (470 aa).

The signal sequence occupies residues 1–19 (MLLPLFFFFLHLHLHLSSS). The Peptidase A1 domain occupies 131-466 (YFVRIGVGSP…DGANGFVGFG (336 aa)). Asp-149 is an active-site residue. 6 disulfide bridges follow: Cys-159–Cys-162, Cys-165–Cys-239, Cys-186–Cys-204, Cys-191–Cys-199, Cys-278–Cys-470, and Cys-389–Cys-431. Asp-350 is an active-site residue.

Belongs to the peptidase A1 family.

Its function is as follows. Aspartic protease that may be involved in drought avoidance through abscisic acid signaling. The chain is Protein ASPARTIC PROTEASE IN GUARD CELL 2 (ASPG2) from Arabidopsis thaliana (Mouse-ear cress).